The primary structure comprises 766 residues: FYVE, RhoGEF and PH domain-containing protein 4 (766 aa).

3 disordered regions span residues 1–20 (MEEI…PSKV), 46–83 (NLNA…DKTQ), and 134–188 (ETAT…ESPL). An actin filament-binding region spans residues 1–150 (MEEIKPASAS…SPTTDSCDGN (150 aa)). 2 stretches are compositionally biased toward polar residues: residues 58–83 (LTTT…DKTQ) and 145–157 (DSCD…SSYR). The segment covering 167–184 (LEERGAETETKVQERENG) has biased composition (basic and acidic residues). The region spanning 206–393 (KLHKIANELL…STAASHSNSA (188 aa)) is the DH domain. A PH 1 domain is found at 422–521 (ELIKEGQILK…WIKALQETID (100 aa)). The FYVE-type zinc finger occupies 559–619 (DNEVTMCMKC…VCKDCYQIIS (61 aa)). Positions 565, 568, 582, 585, 590, 593, 611, and 614 each coordinate Zn(2+). Positions 643–740 (NSVVCSFLQY…WLKVILLAVT (98 aa)) constitute a PH 2 domain. A phosphoserine mark is found at serine 702 and serine 716. Residues 742-766 (ETPGGPNEHPATLDDHPEPKKKSEC) are disordered. Residues 752–766 (ATLDDHPEPKKKSEC) are compositionally biased toward basic and acidic residues.

As to quaternary structure, homooligomer. Expressed in different tissues, including brain, cerebellum, peripheral nerve, skeletal muscle, heart, uterus, placenta and testis.

Its subcellular location is the cytoplasm. It localises to the cytoskeleton. It is found in the cell projection. The protein localises to the filopodium. Its function is as follows. Activates CDC42, a member of the Ras-like family of Rho- and Rac proteins, by exchanging bound GDP for free GTP. Plays a role in regulating the actin cytoskeleton and cell shape. Activates MAPK8. The protein is FYVE, RhoGEF and PH domain-containing protein 4 (FGD4) of Homo sapiens (Human).